We begin with the raw amino-acid sequence, 508 residues long: Histidine ammonia-lyase (508 aa).

Residues 145–147 constitute a cross-link (5-imidazolinone (Ala-Gly)); the sequence is ASG. Position 146 is a 2,3-didehydroalanine (Ser) (Ser146).

This sequence belongs to the PAL/histidase family. Contains an active site 4-methylidene-imidazol-5-one (MIO), which is formed autocatalytically by cyclization and dehydration of residues Ala-Ser-Gly.

The protein resides in the cytoplasm. It catalyses the reaction L-histidine = trans-urocanate + NH4(+). It functions in the pathway amino-acid degradation; L-histidine degradation into L-glutamate; N-formimidoyl-L-glutamate from L-histidine: step 1/3. The polypeptide is Histidine ammonia-lyase (Myxococcus xanthus (strain DK1622)).